The sequence spans 301 residues: Ribonuclease Z (301 aa).

Residues His60, His62, Asp64, His65, His137, Asp207, and His265 each contribute to the Zn(2+) site. Asp64 acts as the Proton acceptor in catalysis.

This sequence belongs to the RNase Z family. As to quaternary structure, homodimer. Zn(2+) serves as cofactor.

The enzyme catalyses Endonucleolytic cleavage of RNA, removing extra 3' nucleotides from tRNA precursor, generating 3' termini of tRNAs. A 3'-hydroxy group is left at the tRNA terminus and a 5'-phosphoryl group is left at the trailer molecule.. Its function is as follows. Zinc phosphodiesterase, which displays some tRNA 3'-processing endonuclease activity. Probably involved in tRNA maturation, by removing a 3'-trailer from precursor tRNA. This is Ribonuclease Z from Exiguobacterium sp. (strain ATCC BAA-1283 / AT1b).